Reading from the N-terminus, the 547-residue chain is Delta-guaiene synthase 3 (547 aa).

Positions 299, 303, and 444 each coordinate Mg(2+). Positions Asp299–Asp303 match the DDXXD motif motif.

Belongs to the terpene synthase family. Mg(2+) is required as a cofactor.

The enzyme catalyses (2E,6E)-farnesyl diphosphate = delta-guaiene + diphosphate. The catalysed reaction is (2E,6E)-farnesyl diphosphate = alpha-guaiene + diphosphate. It functions in the pathway secondary metabolite biosynthesis; terpenoid biosynthesis. Its function is as follows. Sesquiterpene synthase involved in the biosynthesis of delta-guaiene (78.2%) and alpha-guaiene (20.9%), two structures composed of five- and seven-membered rings. Also produces 0.9% of alpha-humulene. This is Delta-guaiene synthase 3 (C4) from Aquilaria crassna (Eagle wood).